Reading from the N-terminus, the 429-residue chain is 3-phosphoshikimate 1-carboxyvinyltransferase (429 aa).

Lys22, Ser23, and Arg27 together coordinate 3-phosphoshikimate. Residue Lys22 coordinates phosphoenolpyruvate. Phosphoenolpyruvate contacts are provided by Gly94 and Arg122. 4 residues coordinate 3-phosphoshikimate: Ser167, Gln169, Asp315, and Lys342. Gln169 contributes to the phosphoenolpyruvate binding site. The Proton acceptor role is filled by Asp315. The phosphoenolpyruvate site is built by Arg346 and Arg388.

It belongs to the EPSP synthase family. Monomer.

The protein resides in the cytoplasm. It carries out the reaction 3-phosphoshikimate + phosphoenolpyruvate = 5-O-(1-carboxyvinyl)-3-phosphoshikimate + phosphate. Its pathway is metabolic intermediate biosynthesis; chorismate biosynthesis; chorismate from D-erythrose 4-phosphate and phosphoenolpyruvate: step 6/7. Functionally, catalyzes the transfer of the enolpyruvyl moiety of phosphoenolpyruvate (PEP) to the 5-hydroxyl of shikimate-3-phosphate (S3P) to produce enolpyruvyl shikimate-3-phosphate and inorganic phosphate. This chain is 3-phosphoshikimate 1-carboxyvinyltransferase, found in Citrifermentans bemidjiense (strain ATCC BAA-1014 / DSM 16622 / JCM 12645 / Bem) (Geobacter bemidjiensis).